The primary structure comprises 272 residues: HMP-PP phosphatase (272 aa).

Asp8 (nucleophile) is an active-site residue. Mg(2+)-binding residues include Asp8, Asp10, and Asp212.

Belongs to the HAD-like hydrolase superfamily. Cof family. It depends on Mg(2+) as a cofactor.

The enzyme catalyses 4-amino-2-methyl-5-(diphosphooxymethyl)pyrimidine + H2O = 4-amino-2-methyl-5-(phosphooxymethyl)pyrimidine + phosphate + H(+). Functionally, catalyzes the hydrolysis of 4-amino-2-methyl-5-hydroxymethylpyrimidine pyrophosphate (HMP-PP) to 4-amino-2-methyl-5-hydroxymethylpyrimidine phosphate (HMP-P). This Salmonella agona (strain SL483) protein is HMP-PP phosphatase.